We begin with the raw amino-acid sequence, 76 residues long: Defensin-like protein 163 (76 aa).

An N-terminal signal peptide occupies residues 1-27 (MAKLIYSYLFISMFVLSVLLALPNAEG). 4 disulfide bridges follow: Cys33/Cys76, Cys43/Cys62, Cys48/Cys70, and Cys52/Cys72.

Belongs to the DEFL family.

It localises to the secreted. The polypeptide is Defensin-like protein 163 (LCR24) (Arabidopsis thaliana (Mouse-ear cress)).